The sequence spans 484 residues: Glutamyl-tRNA(Gln) amidotransferase subunit A (484 aa).

Residues lysine 78 and serine 153 each act as charge relay system in the active site. Serine 177 acts as the Acyl-ester intermediate in catalysis.

This sequence belongs to the amidase family. GatA subfamily. In terms of assembly, heterotrimer of A, B and C subunits.

It catalyses the reaction L-glutamyl-tRNA(Gln) + L-glutamine + ATP + H2O = L-glutaminyl-tRNA(Gln) + L-glutamate + ADP + phosphate + H(+). Allows the formation of correctly charged Gln-tRNA(Gln) through the transamidation of misacylated Glu-tRNA(Gln) in organisms which lack glutaminyl-tRNA synthetase. The reaction takes place in the presence of glutamine and ATP through an activated gamma-phospho-Glu-tRNA(Gln). The protein is Glutamyl-tRNA(Gln) amidotransferase subunit A of Thermodesulfovibrio yellowstonii (strain ATCC 51303 / DSM 11347 / YP87).